The sequence spans 377 residues: MTTQFSVAGIELELFRYPASQESNLQAWDAADEHLINTLVEGGQTAVPTAIINDSFGALSCALSRLNPDWPLNVETDARTSFLGAEQNHHRNQLPMDNLTRFTSRDALPCDLALVLMKLPKNLTYFAHQLMRLSQVLPAGCKVLVGAKAKSINASLLEVFATHLGPASASLAWKKTRVITCISDGKPRALPKEVTWDIPEFNLHISNLSNVFAANKLDIGARIMLDNLPQGDFKTIVDLGCGNGVLGLRAAQLYPNADIHFIDDSEMAVASAKANWANNQLPAEKGHFHWDDCMTHLPDGVEPDLVLCNPPFHQGEAITDHIAWQMFLDARRRLKNGGILHIVGNRHLAYHVKLQRLFKNCTTVASNGKFVILQAQK.

It belongs to the methyltransferase superfamily. RlmG family.

It localises to the cytoplasm. It catalyses the reaction guanosine(1835) in 23S rRNA + S-adenosyl-L-methionine = N(2)-methylguanosine(1835) in 23S rRNA + S-adenosyl-L-homocysteine + H(+). Functionally, specifically methylates the guanine in position 1835 (m2G1835) of 23S rRNA. The protein is Ribosomal RNA large subunit methyltransferase G of Shewanella sp. (strain ANA-3).